The sequence spans 337 residues: DNA-directed RNA polymerase subunit alpha (337 aa).

An alpha N-terminal domain (alpha-NTD) region spans residues 1-233 (MVREEVAGST…DLFLPFLHTE (233 aa)). The segment at 267–337 (IPLNCIFIDQ…LPMDLPKNKF (71 aa)) is alpha C-terminal domain (alpha-CTD).

This sequence belongs to the RNA polymerase alpha chain family. In terms of assembly, in plastids the minimal PEP RNA polymerase catalytic core is composed of four subunits: alpha, beta, beta', and beta''. When a (nuclear-encoded) sigma factor is associated with the core the holoenzyme is formed, which can initiate transcription.

Its subcellular location is the plastid. The protein localises to the chloroplast. The enzyme catalyses RNA(n) + a ribonucleoside 5'-triphosphate = RNA(n+1) + diphosphate. Functionally, DNA-dependent RNA polymerase catalyzes the transcription of DNA into RNA using the four ribonucleoside triphosphates as substrates. The chain is DNA-directed RNA polymerase subunit alpha from Oryza nivara (Indian wild rice).